The chain runs to 338 residues: Aspartate-semialdehyde dehydrogenase (338 aa).

Residues 13–16 (TGAV) and 41–42 (RS) contribute to the NADP(+) site. Arginine 101 provides a ligand contact to phosphate. Cysteine 130 functions as the Acyl-thioester intermediate in the catalytic mechanism. Substrate is bound at residue glutamine 157. NADP(+) is bound at residue 160 to 161 (SG). Lysine 214 contacts phosphate. Arginine 236 provides a ligand contact to substrate. Histidine 243 (proton acceptor) is an active-site residue. Glutamine 316 serves as a coordination point for NADP(+).

The protein belongs to the aspartate-semialdehyde dehydrogenase family. Homodimer.

The catalysed reaction is L-aspartate 4-semialdehyde + phosphate + NADP(+) = 4-phospho-L-aspartate + NADPH + H(+). It functions in the pathway amino-acid biosynthesis; L-lysine biosynthesis via DAP pathway; (S)-tetrahydrodipicolinate from L-aspartate: step 2/4. The protein operates within amino-acid biosynthesis; L-methionine biosynthesis via de novo pathway; L-homoserine from L-aspartate: step 2/3. It participates in amino-acid biosynthesis; L-threonine biosynthesis; L-threonine from L-aspartate: step 2/5. Its function is as follows. Catalyzes the NADPH-dependent formation of L-aspartate-semialdehyde (L-ASA) by the reductive dephosphorylation of L-aspartyl-4-phosphate. The chain is Aspartate-semialdehyde dehydrogenase (asd) from Synechocystis sp. (strain ATCC 27184 / PCC 6803 / Kazusa).